A 296-amino-acid polypeptide reads, in one-letter code: uncharacterized protein (296 aa).

The helical transmembrane segment at 1 to 21 threads the bilayer; sequence MIFAVVDILEISIQLLCILLF.

It is found in the membrane. This is an uncharacterized protein from Caenorhabditis elegans.